A 527-amino-acid chain; its full sequence is Mitogen-activated protein kinase kinae MKK2 (527 aa).

Disordered regions lie at residues 1-143 (MHDQ…SAGS) and 156-189 (IGSTRPQGTPDPASAVGSIYSERSDGGAGMDKDG). Low complexity predominate over residues 107–129 (QQGQSASGGSESSAAHSRSGSFG). Polar residues predominate over residues 134 to 143 (RTSNPTSAGS). Residues 177 to 189 (ERSDGGAGMDKDG) are compositionally biased toward basic and acidic residues. Residues 227–497 (IVELGGLGEG…PWRMLEHPWM (271 aa)) form the Protein kinase domain. ATP is bound by residues 233 to 241 (LGEGAGGAV) and lysine 256.

It belongs to the protein kinase superfamily. STE Ser/Thr protein kinase family. MAP kinase kinase subfamily. Interacts with the adapter protein MST50.

It catalyses the reaction L-seryl-[protein] + ATP = O-phospho-L-seryl-[protein] + ADP + H(+). The enzyme catalyses L-threonyl-[protein] + ATP = O-phospho-L-threonyl-[protein] + ADP + H(+). Functionally, mitogen-activated protein kinase kinase; part of the MCK1-MKK2-MPS1 MAP kinase (MAPK) signal transduction cascade that is essential for appressorium formation, penetration and invasive growth. Beside its role in pathogenesis, the MPS1 cascade is active in conidiation and cellular stress responses. Targets downstream of the the MPS1-MAPK pathway include transcription factors MIG1 and SWI6, as well as GSK1 and MPG1. This Pyricularia oryzae (strain 70-15 / ATCC MYA-4617 / FGSC 8958) (Rice blast fungus) protein is Mitogen-activated protein kinase kinae MKK2.